A 95-amino-acid chain; its full sequence is Large ribosomal subunit protein bL25 (95 aa).

This sequence belongs to the bacterial ribosomal protein bL25 family. In terms of assembly, part of the 50S ribosomal subunit; part of the 5S rRNA/L5/L18/L25 subcomplex. Contacts the 5S rRNA. Binds to the 5S rRNA independently of L5 and L18.

In terms of biological role, this is one of the proteins that binds to the 5S RNA in the ribosome where it forms part of the central protuberance. The sequence is that of Large ribosomal subunit protein bL25 from Shewanella halifaxensis (strain HAW-EB4).